We begin with the raw amino-acid sequence, 477 residues long: MKRSILLAIIAFLQFFTSYGQYDWDNVPIPANAGAGKTWKLQTAASDDFNYTFNPTNNVVDFGPNGNMKWYNKYHNRPNGQPNNFEGPGPTKWMQNHVAVSGGNLNIWASRIPGATKSFTGSNNTPISRPETRAGCITNKTRVKYPVFVEARVKVMNSTLASDIWLLSPDDTQEIDIMECYGGPGNDNRNSYFASKIHLSHHVFIRPPNFKDYQPADLNSWWGKNGVTQWGGKTIRIGVNWVSPTRLEYFVDGQMVRILDNDAVQTRLADGTWQYTYPAGVTSTGVNGQLIKENGYQKMNIASSLSDAKNKSNISVIDPFNYLNNGRKFSKEMDIIINVEDQSWQAEAYRSPNAAEMANFYDNNLLVDWIRVYKPVNASAANSAETTSTVEKPASFEPQGQPTEKLQVYPVPATDVLNISQSDYVEARVYNLKGWVMLRKDVIDQKIDVSSLKKGIYILEITKATGETVKQKIVISE.

The N-terminal stretch at 1 to 20 (MKRSILLAIIAFLQFFTSYG) is a signal peptide. The region spanning 22 to 378 (YDWDNVPIPA…WIRVYKPVNA (357 aa)) is the GH16 domain. Residues 94–104 (MQNHVAVSGGN), 123–125 (NNT), glutamate 174, glutamate 179, arginine 206, and glutamate 340 each bind substrate. Residue glutamate 174 is the Nucleophile of the active site. The active-site Proton donor is the glutamate 179. The span at 382 to 391 (NSAETTSTVE) shows a compositional bias: low complexity. A disordered region spans residues 382–402 (NSAETTSTVEKPASFEPQGQP).

Belongs to the glycosyl hydrolase 16 family.

It is found in the secreted. The enzyme catalyses Hydrolysis of (1-&gt;4)-beta-D-galactosidic linkages in agarose, giving the tetramer as the predominant product.. Its function is as follows. Cleaves the beta-1,4-linkages between beta-D-galactose and alpha-L-3,6-anhydro-galactose residues in agarose. Cleaves agarose in a random manner with retention of the anomeric-bond configuration, producing beta-anomers that give rise progressively to alpha-anomers when mutarotation takes place. Requires at least 4 consecutive agarose units and is highly intolerant to modifications. This is Beta-agarase D (agaD) from Zobellia galactanivorans (strain DSM 12802 / CCUG 47099 / CIP 106680 / NCIMB 13871 / Dsij).